The following is a 262-amino-acid chain: Ornithine carbamoyltransferase (262 aa).

Carbamoyl phosphate-binding positions include 3-7, Q30, R54, and 81-84; these read STRTR and HPTQ. Residues N114, D178, and 182–183 contribute to the L-ornithine site; that span reads SM. Residues 219–222 and T247 each bind carbamoyl phosphate; that span reads HCLP.

It belongs to the aspartate/ornithine carbamoyltransferase superfamily. OTCase family.

The protein resides in the cytoplasm. It carries out the reaction carbamoyl phosphate + L-ornithine = L-citrulline + phosphate + H(+). It functions in the pathway amino-acid biosynthesis; L-arginine biosynthesis; L-arginine from L-ornithine and carbamoyl phosphate: step 1/3. It participates in amino-acid degradation; L-arginine degradation via ADI pathway; carbamoyl phosphate from L-arginine: step 2/2. In terms of biological role, reversibly catalyzes the transfer of the carbamoyl group from carbamoyl phosphate (CP) to the N(epsilon) atom of ornithine (ORN) to produce L-citrulline. This chain is Ornithine carbamoyltransferase (argF), found in Neisseria meningitidis.